A 121-amino-acid chain; its full sequence is Ribosome-binding factor A (121 aa).

The protein belongs to the RbfA family. Monomer. Binds 30S ribosomal subunits, but not 50S ribosomal subunits or 70S ribosomes.

Its subcellular location is the cytoplasm. One of several proteins that assist in the late maturation steps of the functional core of the 30S ribosomal subunit. Associates with free 30S ribosomal subunits (but not with 30S subunits that are part of 70S ribosomes or polysomes). Required for efficient processing of 16S rRNA. May interact with the 5'-terminal helix region of 16S rRNA. The sequence is that of Ribosome-binding factor A from Clostridium kluyveri (strain NBRC 12016).